The following is a 1048-amino-acid chain: Bifunctional heparan sulfate N-deacetylase/N-sulfotransferase (1048 aa).

At 1-172 the chain is on the cytoplasmic side; that stretch reads MTISGGNQHN…RRCFGINVRR (172 aa). Residues 173 to 192 traverse the membrane as a helical; Signal-anchor for type II membrane protein segment; it reads CVLALLAITMVSIFYYTHYV. The heparan sulfate N-deacetylase stretch occupies residues 192-752; the sequence is VDTGVFNGLI…VRHKKIWSKT (561 aa). Residues 193–1048 are Lumenal-facing; the sequence is DTGVFNGLIQ…WLKDDLSTGT (856 aa). Asn-388 and Asn-555 each carry an N-linked (GlcNAc...) asparagine glycan. Positions 753–1048 are heparan sulfate N-sulfotransferase; that stretch reads KNCDSLPKFL…WLKDDLSTGT (296 aa). The active-site For sulfotransferase activity is Lys-768. 768 to 772 contacts 3'-phosphoadenylyl sulfate; sequence KTGTT. N-linked (GlcNAc...) asparagine glycosylation occurs at Asn-823. A 3'-phosphoadenylyl sulfate-binding site is contributed by Ser-877. Asn-892 carries an N-linked (GlcNAc...) asparagine glycan. Cysteines 983 and 993 form a disulfide. 3'-phosphoadenylyl sulfate is bound at residue 998 to 1002; the sequence is KGRQY.

This sequence belongs to the sulfotransferase 1 family. NDST subfamily. Monomer.

It localises to the golgi apparatus membrane. The enzyme catalyses alpha-D-glucosaminyl-[heparan sulfate](n) + 3'-phosphoadenylyl sulfate = N-sulfo-alpha-D-glucosaminyl-[heparan sulfate](n) + adenosine 3',5'-bisphosphate + 2 H(+). It participates in glycan metabolism; heparan sulfate biosynthesis. The protein operates within glycan metabolism; heparin biosynthesis. Functionally, essential bifunctional enzyme that catalyzes both the N-deacetylation and the N-sulfation of glucosamine (GlcNAc) of the glycosaminoglycan in heparan sulfate. Modifies the GlcNAc-GlcA disaccharide repeating sugar backbone to make N-sulfated heparosan, a prerequisite substrate for later modifications in heparin biosynthesis. Plays a role in diffusion of morphogen wingless (wg) via its role in heparan sulfate proteoglycans (HSPGs) biosynthesis, HSPGs being required for movement of wg morphogens. Required for wg signaling during both embryonic and imaginal disk development. Also required for FGF receptor signaling. The sequence is that of Bifunctional heparan sulfate N-deacetylase/N-sulfotransferase (sfl) from Drosophila melanogaster (Fruit fly).